The following is a 377-amino-acid chain: tRNA pseudouridine synthase Pus10 (377 aa).

The active-site Nucleophile is aspartate 206. Tyrosine 270 and tyrosine 339 together coordinate substrate.

The protein belongs to the pseudouridine synthase Pus10 family.

It catalyses the reaction uridine(54) in tRNA = pseudouridine(54) in tRNA. The enzyme catalyses uridine(55) in tRNA = pseudouridine(55) in tRNA. Its function is as follows. Responsible for synthesis of pseudouridine from uracil-54 and uracil-55 in the psi GC loop of transfer RNAs. The chain is tRNA pseudouridine synthase Pus10 from Picrophilus torridus (strain ATCC 700027 / DSM 9790 / JCM 10055 / NBRC 100828 / KAW 2/3).